We begin with the raw amino-acid sequence, 348 residues long: MASPAIRLTQYSHGAGCGCKISPKVLDKILHTEQQKFFDPRLLVGNETRDDAAVYDIGNGVGIISTTDFFMPIVDDPFDFGRIAATNAISDVYAMGGKPIMAIAILGWPIDKLAPEIAQQVIEGGRYVCQQAGISLAGGHSIDAPEPIFGLAVTGIVSTEQVKKNSAAKPGCKLFLTKPLGIGILTTAEKKSKLRPEHRGLATETMCQLNKPGADFAHIPGVTAMTDVTGFGLLGHLSEICQGSGVQAILHYSAIPRLPAVEDYIAEGCVPGGTGRNFDSYGHLIGNMSDLQRQLLCDPQTSGGLLLAVLPDAEADVQAIAAQHGMTLSPIGELTSADSRRALIEIVV.

The active site involves C17. ATP is bound by residues K20 and 48 to 50 (TRD). D51 is a Mg(2+) binding site. ATP is bound by residues D68, D91, and 139–141 (GHS). D91 provides a ligand contact to Mg(2+). Residue D227 participates in Mg(2+) binding.

This sequence belongs to the selenophosphate synthase 1 family. Class I subfamily. As to quaternary structure, homodimer. Mg(2+) is required as a cofactor.

It carries out the reaction hydrogenselenide + ATP + H2O = selenophosphate + AMP + phosphate + 2 H(+). In terms of biological role, synthesizes selenophosphate from selenide and ATP. The sequence is that of Selenide, water dikinase from Yersinia pseudotuberculosis serotype I (strain IP32953).